Reading from the N-terminus, the 285-residue chain is Ribosomal RNA large subunit methyltransferase F (285 aa).

The protein belongs to the methyltransferase superfamily. METTL16/RlmF family.

Its subcellular location is the cytoplasm. It carries out the reaction adenosine(1618) in 23S rRNA + S-adenosyl-L-methionine = N(6)-methyladenosine(1618) in 23S rRNA + S-adenosyl-L-homocysteine + H(+). Functionally, specifically methylates the adenine in position 1618 of 23S rRNA. This chain is Ribosomal RNA large subunit methyltransferase F, found in Christiangramia forsetii (strain DSM 17595 / CGMCC 1.15422 / KT0803) (Gramella forsetii).